Here is a 207-residue protein sequence, read N- to C-terminus: Protein GrpE (207 aa).

The protein belongs to the GrpE family. In terms of assembly, homodimer.

It is found in the cytoplasm. Functionally, participates actively in the response to hyperosmotic and heat shock by preventing the aggregation of stress-denatured proteins, in association with DnaK and GrpE. It is the nucleotide exchange factor for DnaK and may function as a thermosensor. Unfolded proteins bind initially to DnaJ; upon interaction with the DnaJ-bound protein, DnaK hydrolyzes its bound ATP, resulting in the formation of a stable complex. GrpE releases ADP from DnaK; ATP binding to DnaK triggers the release of the substrate protein, thus completing the reaction cycle. Several rounds of ATP-dependent interactions between DnaJ, DnaK and GrpE are required for fully efficient folding. The polypeptide is Protein GrpE (Pelodictyon phaeoclathratiforme (strain DSM 5477 / BU-1)).